A 551-amino-acid chain; its full sequence is Peptidyl-prolyl cis-trans isomerase-like 4 (551 aa).

Positions 1–185 (MSVLLETSLG…RDIRIRHVVV (185 aa)) constitute a PPIase cyclophilin-type domain. Positions 54–88 (GDPSNTGKGGASIWSQLPSTSQDSSTSTYFTPESS) are disordered. Positions 66–88 (IWSQLPSTSQDSSTSTYFTPESS) are enriched in polar residues. One can recognise an RRM domain in the interval 262-340 (NILFVCKLNP…RRIWVDFSQS (79 aa)). The disordered stretch occupies residues 352–551 (RNAGSDAPRA…RQRSRDGSRR (200 aa)). Basic and acidic residues-rich tracts occupy residues 384 to 397 (KRGD…RDQP) and 408 to 454 (SRQD…SHRD). The span at 455 to 464 (HERHHLSRHV) shows a compositional bias: basic residues. Residues 465 to 551 (RPSDEGESKC…RQRSRDGSRR (87 aa)) are compositionally biased toward basic and acidic residues.

It belongs to the cyclophilin-type PPIase family. PPIL4 subfamily.

It localises to the nucleus. The enzyme catalyses [protein]-peptidylproline (omega=180) = [protein]-peptidylproline (omega=0). PPIases accelerate the folding of proteins. It catalyzes the cis-trans isomerization of proline imidic peptide bonds in oligopeptides. The chain is Peptidyl-prolyl cis-trans isomerase-like 4 (CYP6) from Mycosarcoma maydis (Corn smut fungus).